The primary structure comprises 141 residues: VLSSADKNNIKATWDKIGSHAGEYGAEALERTFISFPTTKTYFPHFDLSHGSAQVKAHGKKVADALTLAVGHLEDLPNALSALSDLHAYKLRVDPVNFKLLSHCLLVTLACHHPAEFTPAVHSALDKFFSAVSTVLTSKYR.

Positions Val1–Arg141 constitute a Globin domain. Ser3 carries the phosphoserine modification. N6-succinyllysine is present on residues Lys7 and Lys11. Lys16 bears the N6-acetyllysine; alternate mark. Position 16 is an N6-succinyllysine; alternate (Lys16). The residue at position 24 (Tyr24) is a Phosphotyrosine. Position 35 is a phosphoserine (Ser35). Lys40 carries the N6-succinyllysine modification. Ser49 is subject to Phosphoserine. Residue His58 participates in O2 binding. His87 lines the heme b pocket. Position 102 is a phosphoserine (Ser102). Residues Thr108, Thr134, and Thr137 each carry the phosphothreonine modification. Ser138 is subject to Phosphoserine.

It belongs to the globin family. In terms of assembly, heterotetramer of two alpha chains and two beta chains. As to expression, red blood cells.

In terms of biological role, involved in oxygen transport from the lung to the various peripheral tissues. Functionally, hemopressin acts as an antagonist peptide of the cannabinoid receptor CNR1. Hemopressin-binding efficiently blocks cannabinoid receptor CNR1 and subsequent signaling. The protein is Hemoglobin subunit alpha (HBA) of Paguma larvata (Masked palm civet).